The chain runs to 90 residues: uncharacterized protein (90 aa).

Residues Arg62 to Arg90 form a disordered region. A compositionally biased stretch (polar residues) spans Phe78–Arg90.

This is an uncharacterized protein from Escherichia coli (strain K12).